Here is a 187-residue protein sequence, read N- to C-terminus: uncharacterized protein (187 aa).

The N-myristoyl glycine; by host moiety is linked to residue Gly2.

Belongs to the mimivirus L332/L333/L334 family.

This is an uncharacterized protein from Acanthamoeba polyphaga (Amoeba).